The primary structure comprises 329 residues: MAQSTLYSRVLGTGSYLPPDRVTNQELADRLAKDGIETSDEWIVARTGIHARHFAAPDVTTSDLAFVAAQRAIEAADVDPQSIDLIIVATSTPDFVFPSTACLLQNKLGIKNGGAAFDVQAVCSGFAYALAMADSFIRTGQHRTALIVGAETFSRILDFKDRTTCVLFGDGAGAVVLSASEEPGILGSALHADGSYSNILCTPGNVNRGVIAGSAFLHMDGQAVFKLAVNVLEKVAVEALSKAALAPEQIDWLIPHQANIRIMTSTCRKLGLPQERMIVTVDEHGNTSAASIPLALDVAVRDGRIKRGQHVLIEGVGGGFTWGASVFRY.

Catalysis depends on residues Cys-123 and His-256. The ACP-binding stretch occupies residues 257–261; sequence QANIR. The active site involves Asn-286.

Belongs to the thiolase-like superfamily. FabH family. In terms of assembly, homodimer.

The protein localises to the cytoplasm. The catalysed reaction is malonyl-[ACP] + acetyl-CoA + H(+) = 3-oxobutanoyl-[ACP] + CO2 + CoA. Its pathway is lipid metabolism; fatty acid biosynthesis. Its function is as follows. Catalyzes the condensation reaction of fatty acid synthesis by the addition to an acyl acceptor of two carbons from malonyl-ACP. Catalyzes the first condensation reaction which initiates fatty acid synthesis and may therefore play a role in governing the total rate of fatty acid production. Possesses both acetoacetyl-ACP synthase and acetyl transacylase activities. Its substrate specificity determines the biosynthesis of branched-chain and/or straight-chain of fatty acids. This Burkholderia thailandensis (strain ATCC 700388 / DSM 13276 / CCUG 48851 / CIP 106301 / E264) protein is Beta-ketoacyl-[acyl-carrier-protein] synthase III.